The primary structure comprises 160 residues: Large ribosomal subunit protein uL16 (160 aa).

The segment at 138-160 is disordered; it reads KNLENSSQENTKDSKKSQEEVKQ. Positions 147-160 are enriched in basic and acidic residues; the sequence is NTKDSKKSQEEVKQ.

This sequence belongs to the universal ribosomal protein uL16 family. In terms of assembly, part of the 50S ribosomal subunit.

Its function is as follows. Binds 23S rRNA and is also seen to make contacts with the A and possibly P site tRNAs. In Prochlorococcus marinus (strain AS9601), this protein is Large ribosomal subunit protein uL16.